Here is a 159-residue protein sequence, read N- to C-terminus: NAD(P)H-quinone oxidoreductase subunit N (159 aa).

The protein belongs to the complex I NdhN subunit family. As to quaternary structure, NDH-1 can be composed of about 15 different subunits; different subcomplexes with different compositions have been identified which probably have different functions.

The protein resides in the cell inner membrane. It carries out the reaction a plastoquinone + NADH + (n+1) H(+)(in) = a plastoquinol + NAD(+) + n H(+)(out). The enzyme catalyses a plastoquinone + NADPH + (n+1) H(+)(in) = a plastoquinol + NADP(+) + n H(+)(out). NDH-1 shuttles electrons from an unknown electron donor, via FMN and iron-sulfur (Fe-S) centers, to quinones in the respiratory and/or the photosynthetic chain. The immediate electron acceptor for the enzyme in this species is believed to be plastoquinone. Couples the redox reaction to proton translocation, and thus conserves the redox energy in a proton gradient. Cyanobacterial NDH-1 also plays a role in inorganic carbon-concentration. The chain is NAD(P)H-quinone oxidoreductase subunit N from Gloeobacter violaceus (strain ATCC 29082 / PCC 7421).